A 222-amino-acid polypeptide reads, in one-letter code: N-(5'-phosphoribosyl)anthranilate isomerase (222 aa).

The protein belongs to the TrpF family.

It carries out the reaction N-(5-phospho-beta-D-ribosyl)anthranilate = 1-(2-carboxyphenylamino)-1-deoxy-D-ribulose 5-phosphate. It participates in amino-acid biosynthesis; L-tryptophan biosynthesis; L-tryptophan from chorismate: step 3/5. This chain is N-(5'-phosphoribosyl)anthranilate isomerase, found in Prosthecochloris aestuarii (strain DSM 271 / SK 413).